We begin with the raw amino-acid sequence, 109 residues long: Fluoride-specific ion channel FluC 1 (109 aa).

A run of 3 helical transmembrane segments spans residues 21–41 (FYFK…GFFI), 52–72 (ILFS…HFLY), and 83–103 (LFIY…IGFQ).

The protein belongs to the fluoride channel Fluc/FEX (TC 1.A.43) family.

The protein localises to the cell inner membrane. The catalysed reaction is fluoride(in) = fluoride(out). Functionally, fluoride-specific ion channel. Important for reducing fluoride concentration in the cell, thus reducing its toxicity. The protein is Fluoride-specific ion channel FluC 1 of Prochlorococcus marinus subsp. pastoris (strain CCMP1986 / NIES-2087 / MED4).